The chain runs to 276 residues: Halorhodopsin (276 aa).

Positions 1-20 are excised as a propeptide; the sequence is MTAASTTATTVLQATQSDVL. Position 21 is a pyrrolidone carboxylic acid (Q21). 7 helical membrane-spanning segments follow: residues 31 to 51, 61 to 81, 109 to 129, 134 to 154, 162 to 182, 195 to 215, and 220 to 240; these read SSIW…VAMG, LIWV…AGLA, YLTW…LADT, LFTA…AALI, WVFY…LLVQ, IFGT…ILWA, and GVAL…DILA. K241 is subject to N6-(retinylidene)lysine.

This sequence belongs to the archaeal/bacterial/fungal opsin family. In terms of processing, the covalent binding of retinal to the apoprotein, bacterioopsin, generates bacteriorhodopsin.

The protein localises to the membrane. Functionally, light-driven chloride pump. In Haloarcula marismortui (strain ATCC 43049 / DSM 3752 / JCM 8966 / VKM B-1809) (Halobacterium marismortui), this protein is Halorhodopsin (hop).